A 476-amino-acid polypeptide reads, in one-letter code: Bifunctional protein HldE (476 aa).

Residues 1-320 (MQNPHIPSFA…RAVHQEGGSG (320 aa)) are ribokinase. 196-199 (NLSE) serves as a coordination point for ATP. Residue Asp265 is part of the active site. Positions 345–476 (FTNGCFDIIH…KIVERIREKD (132 aa)) are cytidylyltransferase.

In the N-terminal section; belongs to the carbohydrate kinase PfkB family. This sequence in the C-terminal section; belongs to the cytidylyltransferase family. As to quaternary structure, homodimer.

The enzyme catalyses D-glycero-beta-D-manno-heptose 7-phosphate + ATP = D-glycero-beta-D-manno-heptose 1,7-bisphosphate + ADP + H(+). It catalyses the reaction D-glycero-beta-D-manno-heptose 1-phosphate + ATP + H(+) = ADP-D-glycero-beta-D-manno-heptose + diphosphate. It functions in the pathway nucleotide-sugar biosynthesis; ADP-L-glycero-beta-D-manno-heptose biosynthesis; ADP-L-glycero-beta-D-manno-heptose from D-glycero-beta-D-manno-heptose 7-phosphate: step 1/4. Its pathway is nucleotide-sugar biosynthesis; ADP-L-glycero-beta-D-manno-heptose biosynthesis; ADP-L-glycero-beta-D-manno-heptose from D-glycero-beta-D-manno-heptose 7-phosphate: step 3/4. Its function is as follows. Catalyzes the phosphorylation of D-glycero-D-manno-heptose 7-phosphate at the C-1 position to selectively form D-glycero-beta-D-manno-heptose-1,7-bisphosphate. In terms of biological role, catalyzes the ADP transfer from ATP to D-glycero-beta-D-manno-heptose 1-phosphate, yielding ADP-D-glycero-beta-D-manno-heptose. This is Bifunctional protein HldE from Alcanivorax borkumensis (strain ATCC 700651 / DSM 11573 / NCIMB 13689 / SK2).